The primary structure comprises 86 residues: MNKRVLLVIFFVTLLIADEVNSFSFFRKAKGFLKKIWKSKIARRLREKGMKALKNYANDVINGPAEAPAAAAAPEEPPVEQRRRRR.

The signal sequence occupies residues 1-22 (MNKRVLLVIFFVTLLIADEVNS). The disordered stretch occupies residues 67–86 (APAAAAAPEEPPVEQRRRRR).

Belongs to the non-disulfide-bridged peptide (NDBP) superfamily. Long chain multifunctional peptide (group 2) family. Expressed by the venom gland.

The protein localises to the secreted. Functionally, inhibits angiotensin-converting enzyme (ACE), but does not serve as substrate for the enzyme. Potentiates bradykinin (BK) on the isolated guinea pig ileum as well as the isolated rat uterus for contraction. Also potentiates in vivo the depressor effect of BK on arterial blood pressure in the normotensive anesthetized rat. The protein is Bradykinin-potentiating peptide 25.12 of Lychas mucronatus (Chinese swimming scorpion).